The following is a 248-amino-acid chain: Mannose-binding protein C (248 aa).

A signal peptide spans Met-1–Ser-20. Residues Gly-42 to Lys-99 form the Collagen-like domain. The interval Ile-43–Lys-113 is disordered. Residue Pro-47 is modified to 4-hydroxyproline. The span at Lys-49 to Glu-61 shows a compositional bias: basic and acidic residues. 4-hydroxyproline is present on residues Pro-73, Pro-79, Pro-82, and Pro-88. Residues Lys-75 to Ser-87 show a composition bias toward pro residues. The span at Gln-93–Asp-102 shows a compositional bias: basic and acidic residues. A coiled-coil region spans residues Arg-112–Leu-130. In terms of domain architecture, C-type lectin spans Val-134–Glu-245. 2 cysteine pairs are disulfide-bonded: Cys-155–Cys-244 and Cys-222–Cys-236.

As to quaternary structure, oligomeric complex of 3 or more homotrimers. Interacts with MASP1 and MASP2. Interacts with MEP1A and MEP1B and may inhibit their catalytic activity. In terms of processing, hydroxylation on proline residues within the sequence motif, GXPG, is most likely to be 4-hydroxy as this fits the requirement for 4-hydroxylation in vertebrates.

Its subcellular location is the secreted. Functionally, calcium-dependent lectin involved in innate immune defense. Binds mannose, fucose and N-acetylglucosamine on different microorganisms and activates the lectin complement pathway. Binds to late apoptotic cells, as well as to apoptotic blebs and to necrotic cells, but not to early apoptotic cells, facilitating their uptake by macrophages. This chain is Mannose-binding protein C (MBL2), found in Gorilla gorilla gorilla (Western lowland gorilla).